The following is a 128-amino-acid chain: Large ribosomal subunit protein bL12 (128 aa).

This sequence belongs to the bacterial ribosomal protein bL12 family. Homodimer. Part of the ribosomal stalk of the 50S ribosomal subunit. Forms a multimeric L10(L12)X complex, where L10 forms an elongated spine to which 2 to 4 L12 dimers bind in a sequential fashion. Binds GTP-bound translation factors.

Its function is as follows. Forms part of the ribosomal stalk which helps the ribosome interact with GTP-bound translation factors. Is thus essential for accurate translation. The sequence is that of Large ribosomal subunit protein bL12 from Thermotoga petrophila (strain ATCC BAA-488 / DSM 13995 / JCM 10881 / RKU-1).